The sequence spans 165 residues: Coatomer subunit zeta (165 aa).

It belongs to the adaptor complexes small subunit family. As to quaternary structure, oligomeric complex that consists of at least the alpha, beta, beta', gamma, delta, epsilon and zeta subunits.

It localises to the cytoplasm. Its subcellular location is the golgi apparatus membrane. It is found in the cytoplasmic vesicle. The protein localises to the COPI-coated vesicle membrane. Functionally, the coatomer is a cytosolic protein complex that binds to dilysine motifs and reversibly associates with Golgi non-clathrin-coated vesicles, which further mediate biosynthetic protein transport from the ER, via the Golgi up to the trans Golgi network. Coatomer complex is required for budding from Golgi membranes, and is essential for the retrograde Golgi-to-ER transport of dilysine-tagged proteins. The zeta subunit may be involved in regulating the coat assembly and, hence, the rate of biosynthetic protein transport due to its association-dissociation properties with the coatomer complex. This chain is Coatomer subunit zeta, found in Encephalitozoon cuniculi (strain GB-M1) (Microsporidian parasite).